Here is a 226-residue protein sequence, read N- to C-terminus: 2-C-methyl-D-erythritol 4-phosphate cytidylyltransferase (226 aa).

The protein belongs to the IspD/TarI cytidylyltransferase family. IspD subfamily.

The enzyme catalyses 2-C-methyl-D-erythritol 4-phosphate + CTP + H(+) = 4-CDP-2-C-methyl-D-erythritol + diphosphate. It functions in the pathway isoprenoid biosynthesis; isopentenyl diphosphate biosynthesis via DXP pathway; isopentenyl diphosphate from 1-deoxy-D-xylulose 5-phosphate: step 2/6. In terms of biological role, catalyzes the formation of 4-diphosphocytidyl-2-C-methyl-D-erythritol from CTP and 2-C-methyl-D-erythritol 4-phosphate (MEP). The polypeptide is 2-C-methyl-D-erythritol 4-phosphate cytidylyltransferase (Bacillus cereus (strain ATCC 10987 / NRS 248)).